The following is a 607-amino-acid chain: WD repeat-containing protein 1 (607 aa).

WD repeat units follow at residues 4 to 45 (ELKK…IRNI), 48 to 87 (PAIA…IWDT), 93 to 135 (LLKY…LWDT), 138 to 176 (SVGE…FFEG), 180 to 218 (KFKF…LYDG), 224 to 263 (VGNL…IWDV), 270 to 306 (TTFH…YLDK), 311 to 351 (RPLR…YWDA), 358 to 408 (TFTG…KMDV), 432 to 474 (LKDK…LYSI), 480 to 518 (KDEG…VFNV), 523 to 561 (SEQN…VWTL), and 566 to 604 (ARIK…QWTV).

Belongs to the WD repeat AIP1 family.

The protein localises to the cell membrane. It localises to the cytoplasm. It is found in the cytoskeleton. The protein resides in the nucleus. Functionally, induces disassembly of actin filaments in conjunction with ADF/cofilin family proteins. Doesn't sever actin filaments alone, but caps the barbed ends of filaments severed by cofilin, which blocks annealing and depolymerization and allows more extensive severing by cofilin. This is WD repeat-containing protein 1 from Xenopus tropicalis (Western clawed frog).